The chain runs to 924 residues: Hexokinase-3 (924 aa).

Positions 1 to 27 (MAAIEPSGLHPGERDSSCPQEGIPRPS) are disordered. Hexokinase domains are found at residues 27 to 471 (SGSL…MVTA) and 477 to 913 (ATHR…LVTR). Residues 84–220 (HGTEQGDFLV…TYNIDVVAMV (137 aa)) are hexokinase small subdomain 1. An ATP-binding site is contributed by 95-102 (ELGATGAS). 95-104 (ELGATGASLR) provides a ligand contact to D-glucose 6-phosphate. Residues Ser-168, 185 to 186 (TK), and 221 to 222 (ND) contribute to the D-glucose site. The tract at residues 221-460 (NDTVGTMMGC…CDVSFIPSVD (240 aa)) is hexokinase large subdomain 1. D-glucose 6-phosphate contacts are provided by Asp-222 and Thr-245. Residues Asn-248, Glu-273, and 304–307 (QRFE) each bind D-glucose. Residue 426 to 428 (GGR) participates in D-glucose 6-phosphate binding. ATP contacts are provided by residues 438–439 (CI) and 542–547 (DLGGTN). Residues 531-662 (DGSERGDFLA…AVELNVVAIV (132 aa)) form a hexokinase small subdomain 2 region. 542-546 (DLGGT) is a D-glucose 6-phosphate binding site. D-glucose contacts are provided by residues 610–611 (SF), 627–628 (TK), and 663–664 (ND). Positions 663 to 902 (NDTVGTMMSC…CTVTFLQSED (240 aa)) are hexokinase large subdomain 2. Residues Asp-664 and Thr-687 each contribute to the D-glucose 6-phosphate site. Thr-687 is a binding site for ATP. D-glucose is bound by residues 689-690 (TN), Glu-715, and Glu-749. ATP is bound by residues 754-755 (GM), 791-795 (TKFLS), and 870-874 (TLYKL). D-glucose 6-phosphate contacts are provided by residues 868–870 (DGT) and Ser-904.

Belongs to the hexokinase family.

The catalysed reaction is a D-hexose + ATP = a D-hexose 6-phosphate + ADP + H(+). The enzyme catalyses D-fructose + ATP = D-fructose 6-phosphate + ADP + H(+). It catalyses the reaction D-glucose + ATP = D-glucose 6-phosphate + ADP + H(+). It participates in carbohydrate metabolism; hexose metabolism. Its pathway is carbohydrate degradation; glycolysis; D-glyceraldehyde 3-phosphate and glycerone phosphate from D-glucose: step 1/4. With respect to regulation, hexokinase is an allosteric enzyme inhibited by its product D-glucose 6-phosphate. Catalyzes the phosphorylation of hexose, such as D-glucose and D-fructose, to hexose 6-phosphate (D-glucose 6-phosphate and D-fructose 6-phosphate, respectively). Mediates the initial step of glycolysis by catalyzing phosphorylation of D-glucose to D-glucose 6-phosphate. The sequence is that of Hexokinase-3 from Rattus norvegicus (Rat).